A 691-amino-acid chain; its full sequence is DNA ligase (691 aa).

NAD(+)-binding positions include 41–45, 90–91, and Glu-130; these read DAEYD and SL. Lys-132 (N6-AMP-lysine intermediate) is an active-site residue. NAD(+) is bound by residues Arg-153, Glu-190, Lys-307, and Lys-331. Cys-425, Cys-428, Cys-443, and Cys-449 together coordinate Zn(2+). In terms of domain architecture, BRCT spans 610–691; it reads APQGVLAGKT…LHQLLEGNTP (82 aa).

This sequence belongs to the NAD-dependent DNA ligase family. LigA subfamily. Mg(2+) is required as a cofactor. Mn(2+) serves as cofactor.

The catalysed reaction is NAD(+) + (deoxyribonucleotide)n-3'-hydroxyl + 5'-phospho-(deoxyribonucleotide)m = (deoxyribonucleotide)n+m + AMP + beta-nicotinamide D-nucleotide.. Its function is as follows. DNA ligase that catalyzes the formation of phosphodiester linkages between 5'-phosphoryl and 3'-hydroxyl groups in double-stranded DNA using NAD as a coenzyme and as the energy source for the reaction. It is essential for DNA replication and repair of damaged DNA. In Burkholderia cenocepacia (strain ATCC BAA-245 / DSM 16553 / LMG 16656 / NCTC 13227 / J2315 / CF5610) (Burkholderia cepacia (strain J2315)), this protein is DNA ligase.